The chain runs to 123 residues: Highly acidic elicitin 20 (123 aa).

Residues M1–A20 form the signal peptide. 3 disulfides stabilise this stretch: C23/C91, C47/C76, and C71/C115.

The protein belongs to the elicitin family.

The protein localises to the secreted. In terms of biological role, induces local and distal defense responses (incompatible hypersensitive reaction) in plants from the solanaceae and cruciferae families. Elicits leaf necrosis and causes the accumulation of pathogenesis-related proteins. Might interact with the lipidic molecules of the plasma membrane. This Phytophthora cryptogea protein is Highly acidic elicitin 20 (B20).